Reading from the N-terminus, the 378-residue chain is Ribosomal RNA large subunit methyltransferase G (378 aa).

The protein belongs to the methyltransferase superfamily. RlmG family.

The protein resides in the cytoplasm. The catalysed reaction is guanosine(1835) in 23S rRNA + S-adenosyl-L-methionine = N(2)-methylguanosine(1835) in 23S rRNA + S-adenosyl-L-homocysteine + H(+). In terms of biological role, specifically methylates the guanine in position 1835 (m2G1835) of 23S rRNA. The chain is Ribosomal RNA large subunit methyltransferase G from Salmonella paratyphi A (strain ATCC 9150 / SARB42).